A 773-amino-acid chain; its full sequence is E3 ubiquitin-protein ligase RFWD3 (773 aa).

Disordered stretches follow at residues 18 to 67 (VAEQ…SQVG), 92 to 117 (RVEN…IPVS), 139 to 230 (LRPP…EEVV), and 259 to 279 (GETL…SVSK). Serine 47 carries the phosphoserine; by ATM and ATR modification. Low complexity predominate over residues 50-59 (APPLLQPAPA). Serine 64 carries the phosphoserine; by ATM and ATR modification. The segment covering 151–164 (RSRRRRGSASRRSR) has biased composition (basic residues). Over residues 186–205 (VSRTQPHLPSMSQDSETRNP) the composition is skewed to polar residues. The span at 207-221 (SEDLQVSSSSSSDSE) shows a compositional bias: low complexity. The segment covering 263-273 (PKQSPQKTNPL) has biased composition (polar residues). Residues 287 to 331 (CTICFEHWTNAGDHRLSALRCGHLFGYKCISKWLKGQARKCPQCN) form an RING-type; degenerate zinc finger. Positions 361–403 (SLLKEQMLRKQAELESAQCRLQLQVLTDECSKLHSRVQDLQKL) form a coiled coil. WD repeat units lie at residues 494-536 (MHGK…QTYN), 538-576 (GRPV…SHIQ), and 582-627 (KARC…SHWP).

Interacts with MDM2 and p53/TP53. Binds to the RPA complex via direct interaction with RPA2. Interacts with RAD51. Phosphorylated at Ser-46 and Ser-63 upon DNA damage by ATM or ATR. ATM phosphorylation occurs at early times upon DNA damage, while ATR is the major kinase at later times. Phosphorylation by ATM and ATR is required to stabilize p53/TP53. Part of the phosphorylation depends upon RPA2 presence.

It is found in the nucleus. The protein resides in the PML body. It localises to the cytoplasm. It catalyses the reaction S-ubiquitinyl-[E2 ubiquitin-conjugating enzyme]-L-cysteine + [acceptor protein]-L-lysine = [E2 ubiquitin-conjugating enzyme]-L-cysteine + N(6)-ubiquitinyl-[acceptor protein]-L-lysine.. The protein operates within protein modification; protein ubiquitination. E3 ubiquitin-protein ligase required for the repair of DNA interstrand cross-links (ICL) in response to DNA damage. Plays a key role in RPA-mediated DNA damage signaling and repair. Acts by mediating ubiquitination of the RPA complex (RPA1, RPA2 and RPA3 subunits) and RAD51 at stalled replication forks, leading to remove them from DNA damage sites and promote homologous recombination. Also mediates the ubiquitination of p53/TP53 in the late response to DNA damage, and acts as a positive regulator of p53/TP53 stability, thereby regulating the G1/S DNA damage checkpoint. May act by catalyzing the formation of short polyubiquitin chains on p53/TP53 that are not targeted to the proteasome. In response to ionizing radiation, interacts with MDM2 and enhances p53/TP53 ubiquitination, possibly by restricting MDM2 from extending polyubiquitin chains on ubiquitinated p53/TP53. Required to translesion DNA synthesis across DNA-protein cross-link adducts by catalyzing ubiquitination of proteins on single-stranded DNA (ssDNA). This chain is E3 ubiquitin-protein ligase RFWD3 (RFWD3), found in Ailuropoda melanoleuca (Giant panda).